Reading from the N-terminus, the 116-residue chain is Tyrosine-protein phosphatase 14 (116 aa).

One can recognise a Tyrosine-protein phosphatase domain in the interval 1–116; it reads WRMITQEKAQ…SLKNPGPVIV (116 aa). Aspartate 84 is a binding site for substrate.

It belongs to the protein-tyrosine phosphatase family.

The catalysed reaction is O-phospho-L-tyrosyl-[protein] + H2O = L-tyrosyl-[protein] + phosphate. The sequence is that of Tyrosine-protein phosphatase 14 (STY-14) from Styela plicata (Wrinkled sea squirt).